The sequence spans 444 residues: Phosphoglucosamine mutase (444 aa).

Ser102 (phosphoserine intermediate) is an active-site residue. Mg(2+) contacts are provided by Ser102, Asp241, Asp243, and Asp245. Residue Ser102 is modified to Phosphoserine.

Belongs to the phosphohexose mutase family. Mg(2+) is required as a cofactor. Post-translationally, activated by phosphorylation.

The catalysed reaction is alpha-D-glucosamine 1-phosphate = D-glucosamine 6-phosphate. Its function is as follows. Catalyzes the conversion of glucosamine-6-phosphate to glucosamine-1-phosphate. This Pasteurella multocida (strain Pm70) protein is Phosphoglucosamine mutase.